Consider the following 357-residue polypeptide: Holliday junction branch migration complex subunit RuvB (357 aa).

Residues 1–15 are compositionally biased toward low complexity; that stretch reads MAIQSDSLSSLPDSP. Residues 1–30 form a disordered region; that stretch reads MAIQSDSLSSLPDSPRIVAPQPVSPNEESI. The tract at residues 13 to 195 is large ATPase domain (RuvB-L); sequence DSPRIVAPQP…FGIVSRLEFY (183 aa). ATP is bound by residues Leu-34, Arg-35, Gly-76, Lys-79, Thr-80, Thr-81, 142–144, Arg-185, Tyr-195, and Arg-232; that span reads EDF. Thr-80 serves as a coordination point for Mg(2+). Positions 196–266 are small ATPAse domain (RuvB-S); the sequence is NTDELARIVT…AAGRALAMLD (71 aa). Residues 269 to 357 are head domain (RuvB-H); that stretch reads PQGLDVMDRK…SGGTGELFSK (89 aa). Residues Arg-305, Arg-324, and Arg-329 each coordinate DNA.

The protein belongs to the RuvB family. Homohexamer. Forms an RuvA(8)-RuvB(12)-Holliday junction (HJ) complex. HJ DNA is sandwiched between 2 RuvA tetramers; dsDNA enters through RuvA and exits via RuvB. An RuvB hexamer assembles on each DNA strand where it exits the tetramer. Each RuvB hexamer is contacted by two RuvA subunits (via domain III) on 2 adjacent RuvB subunits; this complex drives branch migration. In the full resolvosome a probable DNA-RuvA(4)-RuvB(12)-RuvC(2) complex forms which resolves the HJ.

The protein localises to the cytoplasm. The enzyme catalyses ATP + H2O = ADP + phosphate + H(+). Functionally, the RuvA-RuvB-RuvC complex processes Holliday junction (HJ) DNA during genetic recombination and DNA repair, while the RuvA-RuvB complex plays an important role in the rescue of blocked DNA replication forks via replication fork reversal (RFR). RuvA specifically binds to HJ cruciform DNA, conferring on it an open structure. The RuvB hexamer acts as an ATP-dependent pump, pulling dsDNA into and through the RuvAB complex. RuvB forms 2 homohexamers on either side of HJ DNA bound by 1 or 2 RuvA tetramers; 4 subunits per hexamer contact DNA at a time. Coordinated motions by a converter formed by DNA-disengaged RuvB subunits stimulates ATP hydrolysis and nucleotide exchange. Immobilization of the converter enables RuvB to convert the ATP-contained energy into a lever motion, pulling 2 nucleotides of DNA out of the RuvA tetramer per ATP hydrolyzed, thus driving DNA branch migration. The RuvB motors rotate together with the DNA substrate, which together with the progressing nucleotide cycle form the mechanistic basis for DNA recombination by continuous HJ branch migration. Branch migration allows RuvC to scan DNA until it finds its consensus sequence, where it cleaves and resolves cruciform DNA. The polypeptide is Holliday junction branch migration complex subunit RuvB (Bordetella bronchiseptica (strain ATCC BAA-588 / NCTC 13252 / RB50) (Alcaligenes bronchisepticus)).